Reading from the N-terminus, the 335-residue chain is Syntaxin-18 (335 aa).

The Cytoplasmic portion of the chain corresponds to 1–309 (MAVDITLLFR…EDIREAIKNN (309 aa)). Positions 168–208 (KLEPEPNTKTRESTSSEKVSRSPSKDSEENPATEERPEKIL) are enriched in basic and acidic residues. Residues 168-226 (KLEPEPNTKTRESTSSEKVSRSPSKDSEENPATEERPEKILAETQPELGTWGDGKGEDE) form a disordered region. The t-SNARE coiled-coil homology domain maps to 243 to 305 (IGEMNSLFDE…KEGNEDIREA (63 aa)). The helical; Anchor for type IV membrane protein transmembrane segment at 310–330 (AGFRVWILFFLVMCSFSLLFL) threads the bilayer. At 331–335 (DWYDS) the chain is on the vesicular side.

The protein belongs to the syntaxin family. As to quaternary structure, component of a SNARE complex consisting of STX18, USE1L, BNIP1/SEC20L, and SEC22B. RINT1/TIP20L and ZW10 are associated with the complex through interaction with BNIP1/SEC20L. Interacts directly with USE1L and BNIP1/SEC20L.

Its subcellular location is the endoplasmic reticulum membrane. It is found in the golgi apparatus membrane. Its function is as follows. Syntaxin that may be involved in targeting and fusion of Golgi-derived retrograde transport vesicles with the ER. This Pongo abelii (Sumatran orangutan) protein is Syntaxin-18 (STX18).